The primary structure comprises 677 residues: Transmembrane and coiled-coil domain-containing protein 3 (677 aa).

The signal sequence occupies residues 1–22; that stretch reads MKVLGRSFFWVLFPVLPWAVQA. The stretch at 124 to 204 forms a coiled coil; the sequence is DYKDVVNMKE…EEEIEEHAFD (81 aa). N-linked (GlcNAc...) asparagine glycosylation is found at Asn206 and Asn230. The next 10 helical transmembrane spans lie at 286 to 306, 317 to 337, 350 to 370, 416 to 436, 456 to 476, 498 to 518, 554 to 574, 578 to 598, 608 to 628, and 640 to 660; these read WLCT…GVLL, IVQV…LVGL, ISLQ…LLWG, VLLG…AVMP, ILVL…LCLV, EILI…TELL, FLAI…FVAY, VLVF…ALVL, YIKW…FVLG, and EVYL…PVLW.

The protein belongs to the monovalent cation:proton antiporter 2 (CPA2) transporter (TC 2.A.37) family. Expressed in the cornea, lens capsule and choroid-retinal pigment epithelium (at protein level).

Its subcellular location is the membrane. In terms of biological role, probable Na(+)/H(+) antiporter. This is Transmembrane and coiled-coil domain-containing protein 3 (TMCO3) from Homo sapiens (Human).